A 332-amino-acid polypeptide reads, in one-letter code: tRNA-dihydrouridine(20/20a) synthase (332 aa).

FMN-binding positions include 22-24 (PMM) and glutamine 75. The Proton donor role is filled by cysteine 105. FMN-binding positions include lysine 144, histidine 177, 217–219 (NGG), and 239–240 (GR).

The protein belongs to the Dus family. DusA subfamily. The cofactor is FMN.

It catalyses the reaction 5,6-dihydrouridine(20) in tRNA + NADP(+) = uridine(20) in tRNA + NADPH + H(+). It carries out the reaction 5,6-dihydrouridine(20) in tRNA + NAD(+) = uridine(20) in tRNA + NADH + H(+). The catalysed reaction is 5,6-dihydrouridine(20a) in tRNA + NADP(+) = uridine(20a) in tRNA + NADPH + H(+). The enzyme catalyses 5,6-dihydrouridine(20a) in tRNA + NAD(+) = uridine(20a) in tRNA + NADH + H(+). Catalyzes the synthesis of 5,6-dihydrouridine (D), a modified base found in the D-loop of most tRNAs, via the reduction of the C5-C6 double bond in target uridines. Specifically modifies U20 and U20a in tRNAs. This Xylella fastidiosa (strain Temecula1 / ATCC 700964) protein is tRNA-dihydrouridine(20/20a) synthase.